We begin with the raw amino-acid sequence, 151 residues long: Deoxyuridine 5'-triphosphate nucleotidohydrolase (151 aa).

Residues 70-72 (RSG), Asn83, and 87-89 (VID) each bind substrate.

The protein belongs to the dUTPase family. Requires Mg(2+) as cofactor.

It carries out the reaction dUTP + H2O = dUMP + diphosphate + H(+). It functions in the pathway pyrimidine metabolism; dUMP biosynthesis; dUMP from dCTP (dUTP route): step 2/2. This enzyme is involved in nucleotide metabolism: it produces dUMP, the immediate precursor of thymidine nucleotides and it decreases the intracellular concentration of dUTP so that uracil cannot be incorporated into DNA. The chain is Deoxyuridine 5'-triphosphate nucleotidohydrolase from Desulfitobacterium hafniense (strain DSM 10664 / DCB-2).